Here is a 442-residue protein sequence, read N- to C-terminus: Probable 6-phospho-beta-glucosidase (442 aa).

Residue 5 to 73 participates in NAD(+) binding; it reads LKIVTIGGGS…VPIDIHLTLD (69 aa). Substrate is bound by residues Arg-96 and Asn-150. Residues Cys-172 and His-202 each contribute to the Mn(2+) site. Catalysis depends on Tyr-256, which acts as the Proton acceptor.

The protein belongs to the glycosyl hydrolase 4 family. NAD(+) serves as cofactor. A divalent metal cation is required as a cofactor.

The catalysed reaction is 6-phospho-beta-D-glucosyl-(1-&gt;4)-D-glucose + H2O = D-glucose 6-phosphate + D-glucose. Its function is as follows. Hydrolyzes phospho-beta-glucosides. This Bacillus subtilis (strain 168) protein is Probable 6-phospho-beta-glucosidase (licH).